The following is a 96-amino-acid chain: Pro-glucagon (96 aa).

Basic and acidic residues-rich tracts occupy residues 1-12 (LQDAEDSSRFDA) and 19-30 (EARELSTPKXHS). A disordered region spans residues 1–35 (LQDAEDSSRFDADDTLAGEARELSTPKXHSEGTFS).

It belongs to the glucagon family.

The protein localises to the secreted. In terms of biological role, plays a key role in glucose metabolism and homeostasis. Regulates blood glucose by increasing gluconeogenesis and decreasing glycolysis. The polypeptide is Pro-glucagon (gcg) (Myoxocephalus scorpius (Shorthorn sculpin)).